The chain runs to 570 residues: Probable D-xylulose kinase A (570 aa).

Substrate-binding residues include H98, D279, and N280. Residues W363, 470 to 471 (GG), and N474 each bind ATP.

The protein belongs to the FGGY kinase family.

The protein localises to the cytoplasm. The catalysed reaction is D-xylulose + ATP = D-xylulose 5-phosphate + ADP + H(+). Highly specific D-xylulose kinase which participates in the catabolism of xylose. Xylose is a major component of hemicelluloses such as xylan. Most fungi utilize D-xylose via three enzymatic reactions, xylose reductase (XR), xylitol dehydrogenase (XDH), and xylulokinase, to form xylulose 5-phosphate, which enters pentose phosphate pathway. The protein is Probable D-xylulose kinase A (xkiA) of Arthroderma otae (strain ATCC MYA-4605 / CBS 113480) (Microsporum canis).